Consider the following 346-residue polypeptide: HLA class I histocompatibility antigen, alpha chain F (346 aa).

Positions 1–21 (MAPRSLLLLLSGALALTDTWA) are cleaved as a signal peptide. The tract at residues 22–111 (GSHSLRYFST…LLRRYNQSEA (90 aa)) is alpha-1. The Extracellular portion of the chain corresponds to 22–305 (GSHSLRYFST…EQSPQPTIPI (284 aa)). N91 and R105 together coordinate a peptide antigen. Residue N107 is glycosylated (N-linked (GlcNAc...) asparagine). Residues 112 to 203 (GSHTLQGMNG…ENGKETLQRA (92 aa)) are alpha-2. 2 disulfides stabilise this stretch: C122-C185 and C224-C280. A peptide antigen contacts are provided by T164, Y168, and E176. The interval 204–295 (DPPKAHVAHH…GLPQPLILRW (92 aa)) is alpha-3. The Ig-like C1-type domain occupies 206–296 (PKAHVAHHPI…LPQPLILRWE (91 aa)). The segment at 296–305 (EQSPQPTIPI) is connecting peptide. A helical transmembrane segment spans residues 306–329 (VGIVAGLVVLGAVVTGAVVAAVMW). The Cytoplasmic portion of the chain corresponds to 330–346 (RKKSSDRNRGSYSQAAV). The Sorting signal sequence; Golgi-retention signal; ER-retention signal motif lies at 336–338 (RNR).

It belongs to the MHC class I family. In terms of assembly, forms a heterotrimer with B2M and a self-peptide. Binds a diverse number of peptides ranging from 7 to more than 30 amino acids. Peptide-bound HLA-F-B2M interacts with LILRB1 and LILRB2 but not with KIR3DS1 or KIR3DL2; this interaction is direct. The OC form interacts with KIR3DS1, KIR2DS4 and KIR3DL2; this interaction is direct. Interacts with TAP1-TAP2 complex and CALR; this interaction is required for appropriate folding and peptide loading. Interacts with the coat protein complex II and 14-3-3 proteins; these interactions likely control the anterograde ER-to-Golgi transport of HLA-F. HLA-F-B2M complex interacts with the heavy chain of other MHC class I molecules including HLA-A and HLA-E; this interaction may regulate the intracellular trafficking and the stability of peptide-free MHC class I OCs. Post-translationally, N-glycosylated. In terms of tissue distribution, expressed in resting B cells (at protein level). Expressed in secondary lymphoid organs rich in B and T cells such as the tonsils, spleen, and thymus (at protein level). Expressed in the endothelial cells of the tonsils. Expressed on activated lymphoid cells including B cells, NK cells, CD4+ T cells and memory T cells (at protein level). Expressed in motor neurons of spinal cord.

Its subcellular location is the cell membrane. It localises to the early endosome membrane. It is found in the lysosome membrane. Functionally, non-classical major histocompatibility class Ib molecule postulated to play a role in immune surveillance, immune tolerance and inflammation. Functions in two forms, as a heterotrimeric complex with B2M/beta-2 microglobulin and a peptide (peptide-bound HLA-F-B2M) and as an open conformer (OC) devoid of peptide and B2M (peptide-free OC). In complex with B2M, presents non-canonical self-peptides carrying post-translational modifications, particularly phosphorylated self-peptides. Peptide-bound HLA-F-B2M acts as a ligand for LILRB1 inhibitory receptor, a major player in maternal-fetal tolerance. Peptide-free OC acts as a ligand for KIR3DS1 and KIR3DL2 receptors. Upon interaction with activating KIR3DS1 receptor on NK cells, triggers NK cell degranulation and anti-viral cytokine production. Through interaction with KIR3DL2 receptor, inhibits NK and T cell effector functions. May interact with other MHC class I OCs to cross-present exogenous viral, tumor or minor histompatibility antigens to cytotoxic CD8+ T cells, triggering effector and memory responses. May play a role in inflammatory responses in the peripheral nervous system. Through interaction with KIR3DL2, may protect motor neurons from astrocyte-induced toxicity. This is HLA class I histocompatibility antigen, alpha chain F from Homo sapiens (Human).